The primary structure comprises 453 residues: uncharacterized protein (453 aa).

Disordered stretches follow at residues 183-210 (GNGR…RSLS) and 428-453 (PDSM…QYSK). The span at 198-207 (TKAHNYKTRR) shows a compositional bias: basic residues. The span at 433 to 453 (HPPTFSKNNTSSNPKSHQYSK) shows a compositional bias: polar residues.

This is an uncharacterized protein from Saccharomyces cerevisiae (strain ATCC 204508 / S288c) (Baker's yeast).